Consider the following 56-residue polypeptide: Large ribosomal subunit protein bL33 (56 aa).

Over residues 1 to 12 (MATKGGREKIKL) the composition is skewed to basic and acidic residues. The tract at residues 1 to 28 (MATKGGREKIKLESTAGTGHFYTTSKNK) is disordered. Positions 15–25 (TAGTGHFYTTS) are enriched in polar residues.

It belongs to the bacterial ribosomal protein bL33 family.

The polypeptide is Large ribosomal subunit protein bL33 (Albidiferax ferrireducens (strain ATCC BAA-621 / DSM 15236 / T118) (Rhodoferax ferrireducens)).